Here is a 102-residue protein sequence, read N- to C-terminus: Small ribosomal subunit protein uS10 (102 aa).

It belongs to the universal ribosomal protein uS10 family. As to quaternary structure, part of the 30S ribosomal subunit.

Involved in the binding of tRNA to the ribosomes. The protein is Small ribosomal subunit protein uS10 of Ligilactobacillus salivarius (strain UCC118) (Lactobacillus salivarius).